The sequence spans 71 residues: Long neurotoxin 1 (71 aa).

5 disulfide bridges follow: Cys-3-Cys-21, Cys-14-Cys-42, Cys-27-Cys-31, Cys-46-Cys-57, and Cys-58-Cys-63.

The protein belongs to the three-finger toxin family. Long-chain subfamily. Type II alpha-neurotoxin sub-subfamily. As to expression, expressed by the venom gland.

It localises to the secreted. Binds with high affinity to muscular (alpha-1/CHRNA1) and neuronal (alpha-7/CHRNA7) nicotinic acetylcholine receptor (nAChR) and inhibits acetylcholine from binding to the receptor, thereby impairing neuromuscular and neuronal transmission. In Naja melanoleuca (Forest cobra), this protein is Long neurotoxin 1.